Here is a 261-residue protein sequence, read N- to C-terminus: Mannose-specific lectin 2 (261 aa).

An N-terminal signal peptide occupies residues 1 to 23 (MAKLLLFLLPAILGLLIPRSAVA). 2 consecutive Bulb-type lectin domains span residues 26–131 (TNYL…PWVP) and 145–252 (DNLL…SKRS). Beta-D-mannose is bound by residues 51-55 (QNDCN), Tyr59, Trp63, Gln64, 170-174 (QGDCN), Tyr178, and 182-185 (YGWQ). Positions 51–59 (QNDCNLVLY) match the Carbohydrate-binding motif 1 motif. 2 disulfide bridges follow: Cys54/Cys74 and Cys173/Cys195. The Carbohydrate-binding motif 2 motif lies at 170–178 (QGDCNLVLY).

Forms heterotetramer of 2 chains 1 and 2 chains 2 arranged as a dimer of chain 1 and chain 2 heterodimers.

In terms of biological role, mannose-specific lectin. Shows agglutinating activity towards erythrocytes from rabbit. In Colocasia esculenta (Wild taro), this protein is Mannose-specific lectin 2.